The sequence spans 764 residues: MAGFRWFWDAMGGKNTRNQTKSKNIVAQAAKRGVQFASLSDADVVARAHECAQHSDDESRADLLALLSIGAQRSLSMNPFNVQLQAVLRILEGDVIHMATGEGKTLVGAMASVGYALQGKRVHSITVNDYLAERDAEWMGDLVRYFGLTVSAVTESLNTEQRRRAYASSIVYAPVTEIGFDVLRDQLVTQRSHAVQNGADVAIVDEADSVLIDEALVPLVLAGNEPGTAPAGRITEIVRRLKENEHYSVDADRRNVSLNDKGAALLEQVLGIQSLYDDAHIGTTLVQVNLALHAQALLIRDVHYIIRDGKIALIDASKGRVAQLQRWPDGVQAAVEAKEGLVVTEGGRILDTLTLQSLMGRYPIVCGMTGTAVEATDQLRQFYDLRVSVIEPHKQSQRFDEADRVYATQAEKFRALVKEIELLHTTGQPVLIGTSDVSESEELAQALQARDITVNVLNAKNDAEEAQIIAEAGDIGRVTVSTQMAGRGTDIRLGGANEKDRDAVVAKGGLAVIGSSRHRSSRLDNQLRGRAGRQGDPGLSLFFVSLEDDVVVVGGAGEEIKALPDADGRIDSKRITDFVAHCQRVTEGQLLEIHSQTWKYNKLLADQRVIIDERRARLLDTDQAWVELSEAVPEKAHKLSDKLDPAILVQAAREVMLYHLDRCWSDHLALMDHVRESIHLRTIARETPLDEYHRIAVREFKQLAQRAVDLAVETFRDVTIDQDGAHLADAGLTRPSATWTYMVSDNPLSNNNRSVINGIGSIFR.

ATP is bound by residues glutamine 83, 101–105 (GEGKT), and aspartate 490.

It belongs to the SecA family. Monomer and homodimer. Part of the essential Sec protein translocation apparatus which comprises SecA, SecYEG and auxiliary proteins SecDF. Other proteins may also be involved.

It is found in the cell membrane. The protein resides in the cytoplasm. The catalysed reaction is ATP + H2O + cellular proteinSide 1 = ADP + phosphate + cellular proteinSide 2.. Its function is as follows. Part of the Sec protein translocase complex. Interacts with the SecYEG preprotein conducting channel. Has a central role in coupling the hydrolysis of ATP to the transfer of proteins into and across the cell membrane, serving as an ATP-driven molecular motor driving the stepwise translocation of polypeptide chains across the membrane. The sequence is that of Protein translocase subunit SecA 2 from Corynebacterium diphtheriae (strain ATCC 700971 / NCTC 13129 / Biotype gravis).